Here is a 321-residue protein sequence, read N- to C-terminus: NADH-ubiquinone oxidoreductase chain 1 (321 aa).

A run of 8 helical transmembrane segments spans residues 5 to 25 (LVTL…AFLT), 74 to 94 (LLIL…APIP), 104 to 124 (LGLL…LWAG), 151 to 171 (GIIL…LLTI), 175 to 195 (YTWL…STLA), 227 to 247 (FFLA…ILFI), 256 to 276 (ELFL…FLWI), and 296 to 316 (FLPM…SISG).

The protein belongs to the complex I subunit 1 family.

Its subcellular location is the mitochondrion inner membrane. It catalyses the reaction a ubiquinone + NADH + 5 H(+)(in) = a ubiquinol + NAD(+) + 4 H(+)(out). Functionally, core subunit of the mitochondrial membrane respiratory chain NADH dehydrogenase (Complex I) that is believed to belong to the minimal assembly required for catalysis. Complex I functions in the transfer of electrons from NADH to the respiratory chain. The immediate electron acceptor for the enzyme is believed to be ubiquinone. In Varanus baritji (Black-spotted ridge-tailed monitor), this protein is NADH-ubiquinone oxidoreductase chain 1 (MT-ND1).